The sequence spans 706 residues: Gamma-adducin (706 aa).

The span at 1–10 (MSSDASQGVI) shows a compositional bias: polar residues. Residues 1 to 20 (MSSDASQGVITTPPPPSMPH) are disordered. Ser2 bears the N-acetylserine mark. A phosphoserine mark is found at Ser42, Ser64, Ser402, Ser414, Ser423, Ser442, and Ser461. Disordered regions lie at residues 471–497 (AEDS…LNTN), 535–555 (PSTM…NPFS), 575–610 (GLED…KLEE), and 666–706 (EKIE…KVEA). Residue Lys484 forms a Glycyl lysine isopeptide (Lys-Gly) (interchain with G-Cter in SUMO2) linkage. Phosphoserine is present on residues Ser585, Ser590, Ser673, Ser677, Ser679, Ser681, and Ser683. Positions 589–602 (SSVSQIQSQTQSPQ) are enriched in low complexity. Positions 682–706 (PSKKKKKFRTPSFLKKNKKKEKVEA) are enriched in basic residues. The tract at residues 684 to 701 (KKKKKFRTPSFLKKNKKK) is interaction with calmodulin.

The protein belongs to the aldolase class II family. Adducin subfamily. In terms of assembly, heterodimer of an alpha and a gamma subunit. Post-translationally, sumoylated. In terms of processing, proteolytically cleaved by asparagine endopeptidase (AEP) into 2 fragments. Overexpression of the 1-357 fragment induces neuronal apoptosis, and overexpression of either 1-357 or 358-706 fragment increases the degeneration of dendritic spines. Overexpression of the 1-357 fragment impairs neurite outgrowth by downregulating the expression of Rac2, and induces synaptic dysfunction and cognitive impairments in tau P301S transgenic mice, a mouse model for Alzheimer disease (AD). As to expression, ubiquitously expressed. Cleavage fragment 1-357 is abundantly expressed in the brain of patients with Alzheimer disease (AD), but hardly detectable in age-matched control individuals (at protein level).

Its subcellular location is the cytoplasm. The protein localises to the cytoskeleton. It is found in the cell membrane. Its function is as follows. Membrane-cytoskeleton-associated protein that promotes the assembly of the spectrin-actin network. Plays a role in actin filament capping. Binds to calmodulin. Involved in myogenic reactivity of the renal afferent arteriole (Af-art), renal interlobular arteries and middle cerebral artery (MCA) to increased perfusion pressure. Involved in regulation of potassium channels in the vascular smooth muscle cells (VSMCs) of the Af-art and MCA ex vivo. Involved in regulation of glomerular capillary pressure, glomerular filtration rate (GFR) and glomerular nephrin expression in response to hypertension. Involved in renal blood flow (RBF) autoregulation. Plays a role in podocyte structure and function. Regulates globular monomer actin (G-actin) and filamentous polymer actin (F-actin) ratios in the primary podocytes affecting actin cytoskeleton organization. Regulates expression of synaptopodin, RhoA, Rac1 and CDC42 in the renal cortex and the primary podocytes. Regulates expression of nephrin in the glomeruli and in the primary podocytes, expression of nephrin and podocinin in the renal cortex, and expression of focal adhesion proteins integrin alpha-3 and integrin beta-1 in the glomeruli. Involved in cell migration and cell adhesion of podocytes, and in podocyte foot process effacement. Regulates expression of profibrotics markers MMP2, MMP9, TGF beta-1, tubular tight junction protein E-cadherin, and mesenchymal markers vimentin and alpha-SMA. Promotes the growth of neurites. The sequence is that of Gamma-adducin (ADD3) from Homo sapiens (Human).